A 201-amino-acid polypeptide reads, in one-letter code: Myelomonocytic growth factor (201 aa).

Positions 1–23 (MCCLTPVLALALVLGAPWQALHG) are cleaved as a signal peptide. 2 disulfide bridges follow: C61–C67 and C89–C99. N-linked (GlcNAc...) asparagine glycosylation is found at N123 and N137.

It belongs to the IL-6 superfamily.

Its subcellular location is the secreted. Functionally, hematopoietic growth factor that stimulates the proliferation and colony formation of normal and transformed avian cells of the myeloid lineage. The polypeptide is Myelomonocytic growth factor (Gallus gallus (Chicken)).